A 195-amino-acid chain; its full sequence is Peptidyl-tRNA hydrolase (195 aa).

TRNA is bound at residue Tyr-17. Residue His-22 is the Proton acceptor of the active site. TRNA contacts are provided by Phe-68, Asn-70, and Asn-116.

This sequence belongs to the PTH family. As to quaternary structure, monomer.

The protein localises to the cytoplasm. The catalysed reaction is an N-acyl-L-alpha-aminoacyl-tRNA + H2O = an N-acyl-L-amino acid + a tRNA + H(+). Hydrolyzes ribosome-free peptidyl-tRNAs (with 1 or more amino acids incorporated), which drop off the ribosome during protein synthesis, or as a result of ribosome stalling. In terms of biological role, catalyzes the release of premature peptidyl moieties from peptidyl-tRNA molecules trapped in stalled 50S ribosomal subunits, and thus maintains levels of free tRNAs and 50S ribosomes. This is Peptidyl-tRNA hydrolase from Shewanella loihica (strain ATCC BAA-1088 / PV-4).